The sequence spans 449 residues: Glutamate--tRNA ligase 2 (449 aa).

The 'HIGH' region motif lies at 17–27; it reads PSPTGFLHVGN. The short motif at 248–252 is the 'KMSKS' region element; the sequence is ALSKR. Lysine 251 contributes to the ATP binding site.

Belongs to the class-I aminoacyl-tRNA synthetase family. Glutamate--tRNA ligase type 1 subfamily. Monomer.

The protein localises to the cytoplasm. It catalyses the reaction tRNA(Glu) + L-glutamate + ATP = L-glutamyl-tRNA(Glu) + AMP + diphosphate. Its function is as follows. Catalyzes the attachment of glutamate to tRNA(Glu) in a two-step reaction: glutamate is first activated by ATP to form Glu-AMP and then transferred to the acceptor end of tRNA(Glu). This is Glutamate--tRNA ligase 2 from Jannaschia sp. (strain CCS1).